The chain runs to 204 residues: LexA repressor (204 aa).

Positions 29 to 49 form a DNA-binding region, H-T-H motif; sequence VREIGDAVGLMSSSTVHGHLQ. Residues S127 and K164 each act as for autocatalytic cleavage activity in the active site.

The protein belongs to the peptidase S24 family. In terms of assembly, homodimer.

It catalyses the reaction Hydrolysis of Ala-|-Gly bond in repressor LexA.. In terms of biological role, represses a number of genes involved in the response to DNA damage (SOS response), including recA and lexA. In the presence of single-stranded DNA, RecA interacts with LexA causing an autocatalytic cleavage which disrupts the DNA-binding part of LexA, leading to derepression of the SOS regulon and eventually DNA repair. This is LexA repressor from Desulfitobacterium hafniense (strain DSM 10664 / DCB-2).